Here is a 240-residue protein sequence, read N- to C-terminus: 1-(5-phosphoribosyl)-5-[(5-phosphoribosylamino)methylideneamino] imidazole-4-carboxamide isomerase 1 (240 aa).

D8 functions as the Proton acceptor in the catalytic mechanism. D129 serves as the catalytic Proton donor.

Belongs to the HisA/HisF family.

Its subcellular location is the cytoplasm. The enzyme catalyses 1-(5-phospho-beta-D-ribosyl)-5-[(5-phospho-beta-D-ribosylamino)methylideneamino]imidazole-4-carboxamide = 5-[(5-phospho-1-deoxy-D-ribulos-1-ylimino)methylamino]-1-(5-phospho-beta-D-ribosyl)imidazole-4-carboxamide. Its pathway is amino-acid biosynthesis; L-histidine biosynthesis; L-histidine from 5-phospho-alpha-D-ribose 1-diphosphate: step 4/9. In Ruegeria pomeroyi (strain ATCC 700808 / DSM 15171 / DSS-3) (Silicibacter pomeroyi), this protein is 1-(5-phosphoribosyl)-5-[(5-phosphoribosylamino)methylideneamino] imidazole-4-carboxamide isomerase 1.